A 616-amino-acid chain; its full sequence is Pyrophosphate--fructose 6-phosphate 1-phosphotransferase subunit alpha (616 aa).

Belongs to the phosphofructokinase type A (PFKA) family. PPi-dependent PFK group II subfamily. Clade 'Long' sub-subfamily. As to quaternary structure, tetramer of two alpha (regulatory) and two beta (catalytic) chains.

It is found in the cytoplasm. It participates in carbohydrate degradation; glycolysis; D-glyceraldehyde 3-phosphate and glycerone phosphate from D-glucose: step 3/4. Its activity is regulated as follows. Allosterically activated by fructose 2,6-bisphosphate. In terms of biological role, regulatory subunit of pyrophosphate--fructose 6-phosphate 1-phosphotransferase. This Solanum tuberosum (Potato) protein is Pyrophosphate--fructose 6-phosphate 1-phosphotransferase subunit alpha.